The chain runs to 122 residues: Beta-2-microglobulin (122 aa).

The signal sequence occupies residues 1–22 (MMARIFILALLGQLCFLPYLDA). The 89-residue stretch at 27–115 (PKVQVYSRHP…HLTLQEPKVV (89 aa)) folds into the Ig-like C1-type domain. A disulfide bridge connects residues Cys47 and Cys102.

This sequence belongs to the beta-2-microglobulin family. Heterodimer of an alpha chain and a beta chain. Beta-2-microglobulin is the beta-chain of major histocompatibility complex class I molecules.

The protein resides in the secreted. In terms of biological role, component of the class I major histocompatibility complex (MHC). Involved in the presentation of peptide antigens to the immune system. The chain is Beta-2-microglobulin (B2M) from Trichosurus vulpecula (Brush-tailed possum).